Here is a 489-residue protein sequence, read N- to C-terminus: N-succinylglutamate 5-semialdehyde dehydrogenase (489 aa).

Residue 223-228 (GSSRTG) coordinates NAD(+). Catalysis depends on residues Glu-246 and Cys-280.

This sequence belongs to the aldehyde dehydrogenase family. AstD subfamily.

It carries out the reaction N-succinyl-L-glutamate 5-semialdehyde + NAD(+) + H2O = N-succinyl-L-glutamate + NADH + 2 H(+). It functions in the pathway amino-acid degradation; L-arginine degradation via AST pathway; L-glutamate and succinate from L-arginine: step 4/5. Its function is as follows. Catalyzes the NAD-dependent reduction of succinylglutamate semialdehyde into succinylglutamate. This is N-succinylglutamate 5-semialdehyde dehydrogenase from Aeromonas hydrophila subsp. hydrophila (strain ATCC 7966 / DSM 30187 / BCRC 13018 / CCUG 14551 / JCM 1027 / KCTC 2358 / NCIMB 9240 / NCTC 8049).